The following is a 379-amino-acid chain: Trans-prenyltransferase abpB (379 aa).

Residues 90–91, R112, K197, R264, K266, Y268, and Y338 contribute to the substrate site; that span reads RL.

It belongs to the tryptophan dimethylallyltransferase family.

It catalyses the reaction aspulvinone E + 2 dimethylallyl diphosphate = aspulvinone H + 2 diphosphate. It carries out the reaction butyrolactone II + dimethylallyl diphosphate = butyrolactone I + diphosphate. It participates in secondary metabolite biosynthesis. In terms of biological role, trans-prenyltransferase that acts in both the aspulvinones and butyrolactones pathways. Prenylates aspulvinone E and butyrolactone II to yield repectively aspulvinone H and butyrolactone I. This Aspergillus terreus (strain NIH 2624 / FGSC A1156) protein is Trans-prenyltransferase abpB.